We begin with the raw amino-acid sequence, 425 residues long: Voltage-dependent calcium channel gamma-8 subunit (425 aa).

4 helical membrane passes run Val19–Ile39, Ser129–Ser149, Ile158–Ile178, and Phe208–Ile228. Residues Ser252 and Ser255 each carry the phosphoserine modification. A disordered region spans residues Arg272–Ile304. A compositionally biased stretch (low complexity) spans Ser277–Arg287. The helical transmembrane segment at Val318–Gly338 threads the bilayer. The span at Ala343–Gly354 shows a compositional bias: gly residues. 2 disordered regions span residues Ala343–Phe365 and Gly377–Val425. Over residues Pro387–Pro401 the composition is skewed to pro residues. The segment covering Ala412–Val425 has biased composition (polar residues).

It belongs to the PMP-22/EMP/MP20 family. CACNG subfamily. Interacts with CACNA1C. Identified in a complex with the L-type calcium channel subunits CACNA1C, CACNA2D1 and either CACNB1 or CACNB2. Acts as an auxiliary subunit for AMPA-selective glutamate receptors (AMPARs). Found in a complex with GRIA1, GRIA2, GRIA3, GRIA4, CNIH2, CNIH3, CACNG2, CACNG3, CACNG4, CACNG5 and CACNG7. Interacts with CNIH2. Found in a complex with GRIA1, GRIA2, GRIA3, GRIA4, DLG4 and CNIH2. In terms of processing, palmitoylated. Probably palmitoylated by ZDHHC3 and ZDHHC7. Detected in heart left ventricle.

It is found in the cell membrane. Its subcellular location is the postsynaptic density membrane. In terms of biological role, regulates the activity of L-type calcium channels that contain CACNA1C as pore-forming subunit. Regulates the trafficking and gating properties of AMPA-selective glutamate receptors (AMPARs). Promotes their targeting to the cell membrane and synapses and modulates their gating properties by slowing their rates of activation, deactivation and desensitization and by mediating their resensitization. Does not show subunit-specific AMPA receptor regulation and regulates all AMPAR subunits. The protein is Voltage-dependent calcium channel gamma-8 subunit of Homo sapiens (Human).